A 178-amino-acid polypeptide reads, in one-letter code: Actin-related protein 2/3 complex subunit 3 (178 aa).

Residue Lys-29 forms a Glycyl lysine isopeptide (Lys-Gly) (interchain with G-Cter in ubiquitin) linkage.

Belongs to the ARPC3 family. In terms of assembly, component of the Arp2/3 complex composed of ARP2, ARP3, ARC40/p41-ARC, ARC35/p34-ARC, ARC18/p21-ARC, ARC19/p20-ARC and ARC16/p16-ARC.

Its subcellular location is the cytoplasm. The protein resides in the cytoskeleton. In terms of biological role, functions as a component of the Arp2/3 complex which is involved in regulation of actin polymerization and together with an activating nucleation-promoting factor (NPF) mediates the formation of branched actin networks. The chain is Actin-related protein 2/3 complex subunit 3 (ARC18) from Saccharomyces cerevisiae (strain ATCC 204508 / S288c) (Baker's yeast).